The sequence spans 549 residues: Cytoplasmic trehalase (549 aa).

Substrate is bound by residues Arg-168, 175-176 (WD), Asn-212, 221-223 (RSQ), 292-294 (RDE), and Gly-324. Active-site proton donor/acceptor residues include Asp-326 and Glu-509. Glu-525 serves as a coordination point for substrate.

The protein belongs to the glycosyl hydrolase 37 family. As to quaternary structure, monomer.

The protein resides in the cytoplasm. It carries out the reaction alpha,alpha-trehalose + H2O = alpha-D-glucose + beta-D-glucose. It functions in the pathway glycan degradation; trehalose degradation; D-glucose from alpha,alpha-trehalose: step 1/1. Its function is as follows. Hydrolyzes trehalose to glucose. Could be involved, in cells returning to low osmolarity conditions, in the utilization of the accumulated cytoplasmic trehalose, which was synthesized in response to high osmolarity. This is Cytoplasmic trehalase from Salmonella arizonae (strain ATCC BAA-731 / CDC346-86 / RSK2980).